The following is a 105-amino-acid chain: Type VII secretion system extracellular protein D (105 aa).

Forms heterodimers with EsxB.

The protein resides in the secreted. In Staphylococcus aureus (strain USA300), this protein is Type VII secretion system extracellular protein D.